Here is a 285-residue protein sequence, read N- to C-terminus: Small ribosomal subunit protein uS2 (285 aa).

A disordered region spans residues 229-285 (RHNGKSNAAEEPMAEWERELLEQHEEQKSQDAAPAEQSAPAAEAPAETEQKDAPAAE). Residues 243-257 (EWERELLEQHEEQKS) are compositionally biased toward basic and acidic residues. Residues 260 to 275 (AAPAEQSAPAAEAPAE) are compositionally biased toward low complexity. Basic and acidic residues predominate over residues 276-285 (TEQKDAPAAE).

It belongs to the universal ribosomal protein uS2 family.

The sequence is that of Small ribosomal subunit protein uS2 from Kocuria rhizophila (strain ATCC 9341 / DSM 348 / NBRC 103217 / DC2201).